A 418-amino-acid chain; its full sequence is MKLESQFLSFLYSRGYFNQCTNVSALDQLMSKQCVPTYIGFDCTAKSLHVGSLVQIMILRYLQKFGHKPIVLLGNGTTKIGDPSGKDKSRTMLCSDEIEENALGIYDVLKKFIKFGSGSTDGLLVCNAEWLDDLNYIEFLRNIGRHFSVNNMLTFDSVRLRLEREQNLSFLEFNYMLLQSYDFVELNRRYNCLLQIGGSDQWGNIVSGVELGRKLQLSELFGLTTNLVLTSSGEKMGKTAQGAVWLNGDMYSPVDYWQYFRNVRDEDVGRFLKLFTELPLDKIKELELLQGHEINEAKKMLATEATKICHGEEIAKNIAADALKVFECNDDSGLSTFYVDRCDVDLGLPIIKLLQISGLEKSSSSARRLINDKGCKINDVVVLDVNYKLSLEHFCNASYVKLSCGKKRHLKIMLKSSF.

Tyr38 is a binding site for L-tyrosine. The 'HIGH' region signature appears at 43–52 (CTAKSLHVGS). L-tyrosine contacts are provided by Tyr175 and Gln179. A 'KMSKS' region motif is present at residues 235 to 239 (KMGKT). Lys238 contributes to the ATP binding site. The S4 RNA-binding domain occupies 348–413 (LPIIKLLQIS…CGKKRHLKIM (66 aa)).

Belongs to the class-I aminoacyl-tRNA synthetase family. TyrS type 1 subfamily. As to quaternary structure, homodimer.

It localises to the cytoplasm. The catalysed reaction is tRNA(Tyr) + L-tyrosine + ATP = L-tyrosyl-tRNA(Tyr) + AMP + diphosphate + H(+). Its function is as follows. Catalyzes the attachment of tyrosine to tRNA(Tyr) in a two-step reaction: tyrosine is first activated by ATP to form Tyr-AMP and then transferred to the acceptor end of tRNA(Tyr). This Ehrlichia canis (strain Jake) protein is Tyrosine--tRNA ligase.